We begin with the raw amino-acid sequence, 191 residues long: Cytochrome c biogenesis ATP-binding export protein CcmA (191 aa).

In terms of domain architecture, ABC transporter spans 6–189; it reads LVATDIACRR…RVRTLAIRNF (184 aa). 38-45 lines the ATP pocket; that stretch reads GANGIGKS.

Belongs to the ABC transporter superfamily. CcmA exporter (TC 3.A.1.107) family. As to quaternary structure, the complex is composed of two ATP-binding proteins (CcmA) and two transmembrane proteins (CcmB).

It localises to the cell inner membrane. It catalyses the reaction heme b(in) + ATP + H2O = heme b(out) + ADP + phosphate + H(+). Part of the ABC transporter complex CcmAB involved in the biogenesis of c-type cytochromes; once thought to export heme, this seems not to be the case, but its exact role is uncertain. Responsible for energy coupling to the transport system. This Novosphingobium aromaticivorans (strain ATCC 700278 / DSM 12444 / CCUG 56034 / CIP 105152 / NBRC 16084 / F199) protein is Cytochrome c biogenesis ATP-binding export protein CcmA.